Consider the following 150-residue polypeptide: Large ribosomal subunit protein bL9 (150 aa).

It belongs to the bacterial ribosomal protein bL9 family.

Binds to the 23S rRNA. This is Large ribosomal subunit protein bL9 from Delftia acidovorans (strain DSM 14801 / SPH-1).